The chain runs to 205 residues: GTP cyclohydrolase-2 (205 aa).

A GTP-binding site is contributed by 49 to 53 (RLHSE). Positions 54, 65, and 67 each coordinate Zn(2+). Residues Q70, 92–94 (EGR), and T114 contribute to the GTP site. D126 (proton acceptor) is an active-site residue. The active-site Nucleophile is the R128. The GTP site is built by T149 and K154.

This sequence belongs to the GTP cyclohydrolase II family. Requires Zn(2+) as cofactor.

It carries out the reaction GTP + 4 H2O = 2,5-diamino-6-hydroxy-4-(5-phosphoribosylamino)-pyrimidine + formate + 2 phosphate + 3 H(+). It functions in the pathway cofactor biosynthesis; riboflavin biosynthesis; 5-amino-6-(D-ribitylamino)uracil from GTP: step 1/4. Functionally, catalyzes the conversion of GTP to 2,5-diamino-6-ribosylamino-4(3H)-pyrimidinone 5'-phosphate (DARP), formate and pyrophosphate. This Pseudomonas aeruginosa (strain UCBPP-PA14) protein is GTP cyclohydrolase-2.